Consider the following 605-residue polypeptide: MWTLVGWTILVAGLVAGIRCPDDQVCPVACCPDSGGASYSCCDPGVDLRTTALSGYLGRPCQSPANCPIGHSCVLTAAGTAACCPFSQAMACGDGHHCCPYGFHCSTDGGTCIQRPDIHLLGAVQCPGGEFECPDSSTCCHMLDGSWGCCPMPQASCCEDRVHCCPHGASCDLVHIRCVTALGSHPLTTKLPAQRTNYTGAEGTPVVSPGLLPAALPTSVICPDSRSQCPDDTTCCLLASGEYGCCPMPNAICCSDHLHCCPQDTVCDLRQSRCLSQNKAKTLLTKLPSWTVWDVECDQEVSCPEGQTCCRLQSGKWGCCPFPKAVCCEDHVHCCPEGFRCHTEKDTCEQGLLQVPWAQKTPAQPSRPSQPSPPGPPGPPSPPGPLRSEISCDEVVSCAPGNICCRLASGEWGCCPSSEGYLCMAGERCQVGDRLAPEKMAAHLMSLSQTTDVGCDQHASCPVGQTCCPKLGGGWACCQLPHAVCCEDGQHCCPAGYTCNVKARSCEKAADGAHLAAPLAVGSTGGVMDVACGDRHFCHDEQTCCRDSRGGWACCPFHQGVCCKDQRHCCPAGFHCESQGTRCVHKKSLLHWDSLPRPAAPRPRL.

Residues 1-17 (MWTLVGWTILVAGLVAG) form the signal peptide. Intrachain disulfides connect cysteine 126/cysteine 139 and cysteine 133/cysteine 149. A glycan (N-linked (GlcNAc...) asparagine) is linked at asparagine 197. Disulfide bonds link cysteine 297–cysteine 309, cysteine 303–cysteine 319, cysteine 310–cysteine 327, cysteine 320–cysteine 334, cysteine 328–cysteine 341, and cysteine 335–cysteine 348. The interval 359 to 386 (QKTPAQPSRPSQPSPPGPPGPPSPPGPL) is disordered. Positions 368–385 (PSQPSPPGPPGPPSPPGP) are enriched in pro residues. 2 disulfides stabilise this stretch: cysteine 392-cysteine 404 and cysteine 398-cysteine 414.

The protein belongs to the granulin family. In terms of assembly, progranulin is secreted as a homodimer. Interacts with SLPI; interaction protects progranulin from proteolysis. Interacts (via region corresponding to granulin-7 peptide) with CTSD; stabilizes CTSD and increases its proteolytic activity. Interacts (via region corresponding to granulin-7 peptide) with SORT1; this interaction mediates endocytosis and lysosome delivery of progranulin; interaction occurs at the neuronal cell surface in a stressed nervous system. Interacts with PSAP; facilitates lysosomal delivery of progranulin from the extracellular space and the biosynthetic pathway. Forms a complex with PSAP and M6PR; PSAP bridges the binding between progranulin and M6PR. Forms a complex with PSAP and SORT1; progranulin bridges the interaction between PSAP and SORT1; facilitates lysosomal targeting of PSAP via SORT1; interaction enhances PSAP uptake in primary cortical neurons. Interacts (via regions corresponding to granulin-2 and granulin-7 peptides) with GBA1; this interaction prevents aggregation of GBA1-SCARB2 complex via interaction with HSPA1A upon stress. Interacts (via region corresponding to granulin-7 peptide) with HSPA1A; mediates recruitment of HSPA1A to GBA1 and prevents GBA1 aggregation in response to stress. Cleaved by ELANE; proteolysis is blocked by SLPI and is concentration- and time-dependent and induces CXCL8/IL-8 production; granulin-3 and granulin-4 are resistant to ELANE. Cleaved by CTSL in lysosome thus regulating the maturation and turnover of progranulin within the lysosome.

The protein resides in the secreted. Its subcellular location is the lysosome. In terms of biological role, secreted protein that acts as a key regulator of lysosomal function and as a growth factor involved in inflammation, wound healing and cell proliferation. Regulates protein trafficking to lysosomes, and also the activity of lysosomal enzymes. Also facilitates the acidification of lysosomes, causing degradation of mature CTSD by CTSB. In addition, functions as a wound-related growth factor that acts directly on dermal fibroblasts and endothelial cells to promote division, migration and the formation of capillary-like tubule structures. Also promotes epithelial cell proliferation by blocking TNF-mediated neutrophil activation preventing release of oxidants and proteases. Moreover, modulates inflammation in neurons by preserving neurons survival, axonal outgrowth and neuronal integrity. Its function is as follows. Inhibits epithelial cell proliferation and induces epithelial cells to secrete IL-8. Functionally, stabilizes CTSD through interaction with CTSD leading to maintain its aspartic-type peptidase activity. The sequence is that of Progranulin (GRN) from Cavia porcellus (Guinea pig).